The sequence spans 381 residues: MSGVAGHAEVVGGGIGGLSAAIALGKRGWTVRLHERNDEIRASGSGIYLWDNGLAALDYLGALDSTLVGAHFGARMQTRDAHNALVASSEVNRAGGPRVVTVARERLINALLASADAVGVEVVTGSTVTRVDAAGRIEFDNGHADADLIVVADGIGSRSRDQLGVKTRRRQLNQKCARVLLPREPGMVPSEWVDEYVTFYSGQRFLLYTPCSADLLYLALVCPSDDAPATGDPLPREAWIASFPQLAPLIDRIGPTPRWDEFEMLTLDSWSSGRVAILGDAAHAQPPSLGQGGGCAMLSALGLAHSLSKNYDLTTALGEWESSERSVIQRTQWFSYWLARANKLPDRPRSLLLSAAGHSSLYRNNRMRAALTTPTGITSSK.

Belongs to the 3-hydroxybenzoate 6-hydroxylase family.

The catalysed reaction is 2-heptyl-4(1H)-quinolone + NADH + O2 + H(+) = 2-heptyl-3-hydroxy-4(1H)-quinolone + NAD(+) + H2O. Functionally, could be involved in the degradation of the Pseudomonas aeruginosa quorum sensing signal molecule HHQ (2-heptyl-4-quinolone) to anthranilic acid. May catalyze the hydroxylation of HHQ to PQS (2-heptyl-3-hydroxy-4-quinolone). The polypeptide is Putative 2-heptyl-3-hydroxy-4(1H)-quinolone synthase AqdB1 (Rhodococcus erythropolis (Arthrobacter picolinophilus)).